The sequence spans 648 residues: Biosynthetic arginine decarboxylase (648 aa).

An N6-(pyridoxal phosphate)lysine modification is found at lysine 109. Residue 291–301 (LDVGGGLGVDY) participates in substrate binding.

This sequence belongs to the Orn/Lys/Arg decarboxylase class-II family. SpeA subfamily. It depends on Mg(2+) as a cofactor. Pyridoxal 5'-phosphate is required as a cofactor.

The catalysed reaction is L-arginine + H(+) = agmatine + CO2. It functions in the pathway amine and polyamine biosynthesis; agmatine biosynthesis; agmatine from L-arginine: step 1/1. Its function is as follows. Catalyzes the biosynthesis of agmatine from arginine. The polypeptide is Biosynthetic arginine decarboxylase (Prochlorococcus marinus (strain MIT 9303)).